The chain runs to 151 residues: 3-hydroxyacyl-[acyl-carrier-protein] dehydratase FabZ (151 aa).

The active site involves H56.

It belongs to the thioester dehydratase family. FabZ subfamily.

The protein resides in the cytoplasm. The catalysed reaction is a (3R)-hydroxyacyl-[ACP] = a (2E)-enoyl-[ACP] + H2O. Functionally, involved in unsaturated fatty acids biosynthesis. Catalyzes the dehydration of short chain beta-hydroxyacyl-ACPs and long chain saturated and unsaturated beta-hydroxyacyl-ACPs. In Rhodopseudomonas palustris (strain HaA2), this protein is 3-hydroxyacyl-[acyl-carrier-protein] dehydratase FabZ.